The sequence spans 128 residues: Phosphoribosyl-AMP cyclohydrolase (128 aa).

Residue Asp-86 coordinates Mg(2+). Cys-87 is a binding site for Zn(2+). Mg(2+) is bound by residues Asp-88 and Asp-90. Zn(2+) is bound by residues Cys-103 and Cys-110.

It belongs to the PRA-CH family. As to quaternary structure, homodimer. Mg(2+) serves as cofactor. The cofactor is Zn(2+).

It localises to the cytoplasm. The enzyme catalyses 1-(5-phospho-beta-D-ribosyl)-5'-AMP + H2O = 1-(5-phospho-beta-D-ribosyl)-5-[(5-phospho-beta-D-ribosylamino)methylideneamino]imidazole-4-carboxamide. It functions in the pathway amino-acid biosynthesis; L-histidine biosynthesis; L-histidine from 5-phospho-alpha-D-ribose 1-diphosphate: step 3/9. Catalyzes the hydrolysis of the adenine ring of phosphoribosyl-AMP. This chain is Phosphoribosyl-AMP cyclohydrolase, found in Roseobacter denitrificans (strain ATCC 33942 / OCh 114) (Erythrobacter sp. (strain OCh 114)).